A 448-amino-acid chain; its full sequence is CCA-adding enzyme (448 aa).

Residues Ser-52 and Lys-55 each coordinate ATP. Residues Ser-52 and Lys-55 each contribute to the CTP site. Residues Asp-64, Asp-66, and Asp-118 each contribute to the Mg(2+) site. ATP contacts are provided by His-141, Lys-160, and Tyr-169. CTP is bound by residues His-141, Lys-160, and Tyr-169.

Belongs to the tRNA nucleotidyltransferase/poly(A) polymerase family. Archaeal CCA-adding enzyme subfamily. In terms of assembly, homodimer. It depends on Mg(2+) as a cofactor.

The enzyme catalyses a tRNA precursor + 2 CTP + ATP = a tRNA with a 3' CCA end + 3 diphosphate. The catalysed reaction is a tRNA with a 3' CCA end + 2 CTP + ATP = a tRNA with a 3' CCACCA end + 3 diphosphate. Its function is as follows. Catalyzes the addition and repair of the essential 3'-terminal CCA sequence in tRNAs without using a nucleic acid template. Adds these three nucleotides in the order of C, C, and A to the tRNA nucleotide-73, using CTP and ATP as substrates and producing inorganic pyrophosphate. tRNA 3'-terminal CCA addition is required both for tRNA processing and repair. Also involved in tRNA surveillance by mediating tandem CCA addition to generate a CCACCA at the 3' terminus of unstable tRNAs. While stable tRNAs receive only 3'-terminal CCA, unstable tRNAs are marked with CCACCA and rapidly degraded. The chain is CCA-adding enzyme from Pyrococcus abyssi (strain GE5 / Orsay).